The primary structure comprises 235 residues: Cytidylate kinase (235 aa).

Position 16 to 24 (Gly16 to Thr24) interacts with ATP.

Belongs to the cytidylate kinase family. Type 1 subfamily.

It is found in the cytoplasm. The catalysed reaction is CMP + ATP = CDP + ADP. It catalyses the reaction dCMP + ATP = dCDP + ADP. This Chlorobaculum tepidum (strain ATCC 49652 / DSM 12025 / NBRC 103806 / TLS) (Chlorobium tepidum) protein is Cytidylate kinase.